The chain runs to 236 residues: Probable apoptosis inhibitor 2 (236 aa).

The BIR repeat unit spans residues 85-150 (RKRSFASFKW…AHAADCAFRR (66 aa)). Residues C123, C126, H142, and C146 each contribute to the Zn(2+) site. An RING-type zinc finger spans residues 189 to 223 (CKVCFVNEKSVCFLPCRHLVVCAECSPRCKRCCVC).

This chain is Probable apoptosis inhibitor 2 (IAP2), found in Orgyia pseudotsugata multicapsid polyhedrosis virus (OpMNPV).